Here is a 185-residue protein sequence, read N- to C-terminus: Large ribosomal subunit protein uL5 (185 aa).

The protein belongs to the universal ribosomal protein uL5 family. Part of the 50S ribosomal subunit; part of the 5S rRNA/L5/L18/L25 subcomplex. Contacts the 5S rRNA and the P site tRNA. Forms a bridge to the 30S subunit in the 70S ribosome.

Functionally, this is one of the proteins that bind and probably mediate the attachment of the 5S RNA into the large ribosomal subunit, where it forms part of the central protuberance. In the 70S ribosome it contacts protein S13 of the 30S subunit (bridge B1b), connecting the 2 subunits; this bridge is implicated in subunit movement. Contacts the P site tRNA; the 5S rRNA and some of its associated proteins might help stabilize positioning of ribosome-bound tRNAs. The sequence is that of Large ribosomal subunit protein uL5 from Caulobacter sp. (strain K31).